A 211-amino-acid polypeptide reads, in one-letter code: Thiamine-phosphate synthase (211 aa).

4-amino-2-methyl-5-(diphosphooxymethyl)pyrimidine is bound by residues 37 to 41 and asparagine 69; that span reads QLRIK. Mg(2+) contacts are provided by aspartate 70 and aspartate 89. Residue serine 108 participates in 4-amino-2-methyl-5-(diphosphooxymethyl)pyrimidine binding. Residue 134–136 coordinates 2-[(2R,5Z)-2-carboxy-4-methylthiazol-5(2H)-ylidene]ethyl phosphate; that stretch reads TQT. Lysine 137 contributes to the 4-amino-2-methyl-5-(diphosphooxymethyl)pyrimidine binding site. 2-[(2R,5Z)-2-carboxy-4-methylthiazol-5(2H)-ylidene]ethyl phosphate contacts are provided by residues glycine 166 and 186-187; that span reads VS.

This sequence belongs to the thiamine-phosphate synthase family. It depends on Mg(2+) as a cofactor.

The catalysed reaction is 2-[(2R,5Z)-2-carboxy-4-methylthiazol-5(2H)-ylidene]ethyl phosphate + 4-amino-2-methyl-5-(diphosphooxymethyl)pyrimidine + 2 H(+) = thiamine phosphate + CO2 + diphosphate. The enzyme catalyses 2-(2-carboxy-4-methylthiazol-5-yl)ethyl phosphate + 4-amino-2-methyl-5-(diphosphooxymethyl)pyrimidine + 2 H(+) = thiamine phosphate + CO2 + diphosphate. It catalyses the reaction 4-methyl-5-(2-phosphooxyethyl)-thiazole + 4-amino-2-methyl-5-(diphosphooxymethyl)pyrimidine + H(+) = thiamine phosphate + diphosphate. It participates in cofactor biosynthesis; thiamine diphosphate biosynthesis; thiamine phosphate from 4-amino-2-methyl-5-diphosphomethylpyrimidine and 4-methyl-5-(2-phosphoethyl)-thiazole: step 1/1. Condenses 4-methyl-5-(beta-hydroxyethyl)thiazole monophosphate (THZ-P) and 2-methyl-4-amino-5-hydroxymethyl pyrimidine pyrophosphate (HMP-PP) to form thiamine monophosphate (TMP). The polypeptide is Thiamine-phosphate synthase (Shigella dysenteriae serotype 1 (strain Sd197)).